A 186-amino-acid polypeptide reads, in one-letter code: MALNLKINRQIRAPRVRVIGSSGEQLGILSIKEALDLAREADLDLVEVASNSEPPVCKIMDYGKYRYDVTKKEKDSKKAQHQVRVKEVKLKPNIDDNDFLTKVKQARAFIEKGNKVKVSCMFRGRELAYPEHGHKVVQRMCQGLEDVGFVESEPKLNGRSLICVIAPGTLKTKKKQEKVHAQDEKQ.

Belongs to the IF-3 family. Monomer.

The protein localises to the cytoplasm. In terms of biological role, IF-3 binds to the 30S ribosomal subunit and shifts the equilibrium between 70S ribosomes and their 50S and 30S subunits in favor of the free subunits, thus enhancing the availability of 30S subunits on which protein synthesis initiation begins. This is Translation initiation factor IF-3 from Chlamydia muridarum (strain MoPn / Nigg).